The primary structure comprises 965 residues: Forespore membrane adapter protein MUG56 (965 aa).

Positions 70-175 (SFLMHKSTDE…VQNSNSTSTS (106 aa)) are disordered. Over residues 82-101 (DTPSNLDSPSTQNVGSTNNT) the composition is skewed to polar residues. Residues 102–114 (RASQSLLRRSSSF) show a composition bias toward low complexity. Residues 124–158 (THASTDNNPFSESSTLQPQTAERTSQQAVRSAITE) show a composition bias toward polar residues. Over residues 159 to 175 (TTNPSVSVQNSNSTSTS) the composition is skewed to low complexity. PH domains follow at residues 562–737 (PTPV…EVAS) and 800–961 (VIRM…KEIN).

Belongs to the SPO71 family.

The protein localises to the cytoplasm. It localises to the nucleus. Its subcellular location is the prospore membrane. Its function is as follows. May recruit a lipid transfer protein to the forespore membrane during sporulation, thereby aiding forespore membrane formation. Required for meiosis. The sequence is that of Forespore membrane adapter protein MUG56 from Schizosaccharomyces pombe (strain 972 / ATCC 24843) (Fission yeast).